The chain runs to 98 residues: Putative protein adenylyltransferase MJ1217 (98 aa).

Residues 31–45 carry the GSX(10)DXD motif motif; sequence GSYAREEQKETSDID. Mg(2+)-binding residues include Asp-43, Asp-45, and Asp-75.

This sequence belongs to the MntA antitoxin family. Probably forms a complex with cognate toxin MJ1216. Mg(2+) is required as a cofactor.

It catalyses the reaction L-tyrosyl-[protein] + ATP = O-(5'-adenylyl)-L-tyrosyl-[protein] + diphosphate. The enzyme catalyses O-(5'-adenylyl)-L-tyrosyl-[protein] + ATP = O-[5'-(adenylyl-(5'-&gt;3')-adenylyl)]-L-tyrosyl-[protein] + diphosphate. In terms of biological role, probable antitoxin component of a putative type VII toxin-antitoxin (TA) system. Neutralizes cognate toxic MJ1216 by di-AMPylation. The chain is Putative protein adenylyltransferase MJ1217 from Methanocaldococcus jannaschii (strain ATCC 43067 / DSM 2661 / JAL-1 / JCM 10045 / NBRC 100440) (Methanococcus jannaschii).